We begin with the raw amino-acid sequence, 157 residues long: Transcription elongation factor GreA (157 aa).

Belongs to the GreA/GreB family.

In terms of biological role, necessary for efficient RNA polymerase transcription elongation past template-encoded arresting sites. The arresting sites in DNA have the property of trapping a certain fraction of elongating RNA polymerases that pass through, resulting in locked ternary complexes. Cleavage of the nascent transcript by cleavage factors such as GreA or GreB allows the resumption of elongation from the new 3'terminus. GreA releases sequences of 2 to 3 nucleotides. This chain is Transcription elongation factor GreA, found in Brucella anthropi (strain ATCC 49188 / DSM 6882 / CCUG 24695 / JCM 21032 / LMG 3331 / NBRC 15819 / NCTC 12168 / Alc 37) (Ochrobactrum anthropi).